The sequence spans 450 residues: 23S rRNA (uracil(1939)-C(5))-methyltransferase RlmD (450 aa).

The interval 1-22 (MARNKGGLRFQPSGGARGPAIP) is disordered. One can recognise a TRAM domain in the interval 20–78 (AIPVGKKQRLTIERLAHDGRGIAHEAGMTWFVSGGLPGEELEARVLGARSKVVDARSER). Residues cysteine 91, cysteine 97, cysteine 100, and cysteine 179 each contribute to the [4Fe-4S] cluster site. Glutamine 283, phenylalanine 312, asparagine 317, glutamate 333, aspartate 360, and aspartate 381 together coordinate S-adenosyl-L-methionine. Cysteine 407 functions as the Nucleophile in the catalytic mechanism.

Belongs to the class I-like SAM-binding methyltransferase superfamily. RNA M5U methyltransferase family. RlmD subfamily.

The catalysed reaction is uridine(1939) in 23S rRNA + S-adenosyl-L-methionine = 5-methyluridine(1939) in 23S rRNA + S-adenosyl-L-homocysteine + H(+). Its function is as follows. Catalyzes the formation of 5-methyl-uridine at position 1939 (m5U1939) in 23S rRNA. The protein is 23S rRNA (uracil(1939)-C(5))-methyltransferase RlmD of Pseudomonas aeruginosa (strain UCBPP-PA14).